Consider the following 612-residue polypeptide: Cytoplasmic dynein 1 intermediate chain 2 (612 aa).

Composition is skewed to basic and acidic residues over residues 1 to 13 and 20 to 43; these read MSDKSELKAELER and QIREGKKRKEEERKKKETDQKKEA. 2 disordered regions span residues 1 to 117 and 129 to 188; these read MSDK…MAKI and TYTK…EEKQ. S2 carries the post-translational modification N-acetylserine. Position 51 is a diphosphoserine (S51). Phosphoserine is present on residues S51 and S84. Residues 82–91 show a composition bias toward low complexity; it reads PSSKSVSTPS. A Phosphothreonine modification is found at T89. Phosphoserine occurs at positions 91, 95, and 98. Residues 164–188 show a composition bias toward basic and acidic residues; that stretch reads EKTLKKDEESDSKAPPHELTEEEKQ. WD repeat units lie at residues 251–300, 304–344, 353–394, 403–443, 448–493, 496–536, and 542–581; these read SKHR…TTPE, HCQS…RTPV, AHTH…HPQD, SKAV…AGIS, GHQG…PLYS, DNSD…EVPT, and EGNPALNRVRWTHSGREIAVGDSEGQIVIYDVGEQIAVPR.

It belongs to the dynein intermediate chain family. As to quaternary structure, homodimer. The cytoplasmic dynein 1 complex consists of two catalytic heavy chains (HCs) and a number of non-catalytic subunits presented by intermediate chains (ICs), light intermediate chains (LICs) and light chains (LCs); the composition seems to vary in respect to the IC, LIC and LC composition. The heavy chain homodimer serves as a scaffold for the probable homodimeric assembly of the respective non-catalytic subunits. The ICs and LICs bind directly to the HC dimer and the LCs assemble on the IC dimer. Interacts with DYNLT3. Interacts with DYNLT1. Interacts (dephosphorylated at Ser-84) with DCTN1. Interacts with BICD2. Interacts with SPEF2. Interacts with CFAP61. Post-translationally, the phosphorylation status of Ser-84 appears to be involved in dynactin-dependent target binding. Pyrophosphorylation by 5-diphosphoinositol pentakisphosphate (5-IP7) promotes interaction with DCTN1. Serine pyrophosphorylation is achieved by Mg(2+)-dependent, but enzyme independent transfer of a beta-phosphate from a inositol pyrophosphate to a pre-phosphorylated serine residue.

It is found in the cytoplasm. It localises to the cytoskeleton. Its function is as follows. Acts as one of several non-catalytic accessory components of the cytoplasmic dynein 1 complex that are thought to be involved in linking dynein to cargos and to adapter proteins that regulate dynein function. Cytoplasmic dynein 1 acts as a motor for the intracellular retrograde motility of vesicles and organelles along microtubules. The intermediate chains mediate the binding of dynein to dynactin via its 150 kDa component (p150-glued) DCTN1. Involved in membrane-transport, such as Golgi apparatus, late endosomes and lysosomes. This chain is Cytoplasmic dynein 1 intermediate chain 2 (DYNC1I2), found in Bos taurus (Bovine).